The primary structure comprises 572 residues: Sulfite reductase [NADPH] hemoprotein beta-component (572 aa).

Residues Cys436, Cys442, Cys481, and Cys485 each contribute to the [4Fe-4S] cluster site. Cys485 contacts siroheme.

Belongs to the nitrite and sulfite reductase 4Fe-4S domain family. As to quaternary structure, alpha(8)-beta(8). The alpha component is a flavoprotein, the beta component is a hemoprotein. Siroheme serves as cofactor. Requires [4Fe-4S] cluster as cofactor.

The catalysed reaction is hydrogen sulfide + 3 NADP(+) + 3 H2O = sulfite + 3 NADPH + 4 H(+). Its pathway is sulfur metabolism; hydrogen sulfide biosynthesis; hydrogen sulfide from sulfite (NADPH route): step 1/1. Its function is as follows. Component of the sulfite reductase complex that catalyzes the 6-electron reduction of sulfite to sulfide. This is one of several activities required for the biosynthesis of L-cysteine from sulfate. In Bacillus pumilus (strain SAFR-032), this protein is Sulfite reductase [NADPH] hemoprotein beta-component.